Consider the following 535-residue polypeptide: Glucans biosynthesis protein D 1 (535 aa).

Positions 1–28 (MHRRDLLKQLAAGFLALAPGLTPSTASA) form a signal peptide, tat-type signal. Residues 275–287 (RTDRAGDRQSAAR) form an insert region.

It belongs to the OpgD/OpgG family. Predicted to be exported by the Tat system. The position of the signal peptide cleavage has not been experimentally proven.

It localises to the periplasm. It participates in glycan metabolism; osmoregulated periplasmic glucan (OPG) biosynthesis. In terms of biological role, probably involved in the control of the structural glucose backbone of osmoregulated periplasmic glucans (OPGs). The chain is Glucans biosynthesis protein D 1 (opgD1) from Ralstonia nicotianae (strain ATCC BAA-1114 / GMI1000) (Ralstonia solanacearum).